The following is a 510-amino-acid chain: MSHLVLTPGSLTLKQIREISRGKVTLELADSAIADINTSAGLVQQVLDEGRTVYGINTGFGLLANTKIAADDLQLLQRSIVLSHAAGTGQYMQDATVRLMMVLKINSLSRGFSGIRLEVINFLIALVNAEVYPCVPEKGSVGASGDLAPLSHMCLPLLAEGEMSYKGQLITAAEGLEIAGLKPLELAAKEGLALLNGTQASTALALEGLFNAEDLFAASSVIGAMSVEAAMGSRSPFDSRIHAARGQKGQIDSAAVFRHLLGDESEISLDHVNCEKVQDPYSLRCQPQVLGACLTQIRHAAEVLGTEANGVTDNPLVFQDTGDIISGGNFHAEPVAMAADNLAIAIAELGSIAERRIALLIDSNLSKLPPFLVENGGVNSGFMIAQVTAAALASENKTYAHPASVDSLPTSANQEDHVSMATFAARRLRDMSENTRGVLAVELLAAAQGLDFRRPLQPAVAVAKAKAELRELVTYYDKDRFFGPDIEAATDLLITASYNAYLPADILPSW.

Positions 143 to 145 (ASG) form a cross-link, 5-imidazolinone (Ala-Gly). Serine 144 bears the 2,3-didehydroalanine (Ser) mark.

This sequence belongs to the PAL/histidase family. Post-translationally, contains an active site 4-methylidene-imidazol-5-one (MIO), which is formed autocatalytically by cyclization and dehydration of residues Ala-Ser-Gly.

Its subcellular location is the cytoplasm. It carries out the reaction L-histidine = trans-urocanate + NH4(+). It functions in the pathway amino-acid degradation; L-histidine degradation into L-glutamate; N-formimidoyl-L-glutamate from L-histidine: step 1/3. This Shewanella piezotolerans (strain WP3 / JCM 13877) protein is Histidine ammonia-lyase.